The chain runs to 185 residues: Disulfide bond formation protein B (185 aa).

The Cytoplasmic portion of the chain corresponds to 1 to 25 (MLLFFVILGIFVLTILKAISKQRWS). A helical membrane pass occupies residues 26-42 (WLLLAASALSLELSALY). Residues 43–60 (FQHVMQLEPCVMCVYERL) lie on the Periplasmic side of the membrane. An intrachain disulfide couples Cys52 to Cys55. Residues 61–76 (AMLGILLAGLIGASSP) traverse the membrane as a helical segment. Over 77–83 (NNVFIRL) the chain is Cytoplasmic. Residues 84–101 (SAFLLWGISAVWGILLAI) traverse the membrane as a helical segment. Topologically, residues 102–156 (KHTDYQLHPSPFFTCDFFPNFPAWAPLHEWLPWLFNPTGDCSDIVWQFLGYSMPQ) are periplasmic. Cys116 and Cys142 form a disulfide bridge. Residues 157 to 175 (WLIVSFSLYTLLFIIFAIS) form a helical membrane-spanning segment. The Cytoplasmic portion of the chain corresponds to 176–185 (AVLKTKKQLF).

It belongs to the DsbB family.

It localises to the cell inner membrane. Its function is as follows. Required for disulfide bond formation in some periplasmic proteins. Acts by oxidizing the DsbA protein. This chain is Disulfide bond formation protein B, found in Psychromonas ingrahamii (strain DSM 17664 / CCUG 51855 / 37).